The primary structure comprises 178 residues: Acireductone dioxygenase (178 aa).

H82, H84, E88, and H127 together coordinate Fe(2+). Ni(2+) contacts are provided by H82, H84, E88, and H127. S157 is subject to Phosphoserine.

Belongs to the acireductone dioxygenase (ARD) family. It depends on Fe(2+) as a cofactor. Ni(2+) serves as cofactor.

It localises to the cytoplasm. The protein localises to the nucleus. The enzyme catalyses 1,2-dihydroxy-5-(methylsulfanyl)pent-1-en-3-one + O2 = 4-methylsulfanyl-2-oxobutanoate + formate + 2 H(+). The catalysed reaction is 1,2-dihydroxy-5-(methylsulfanyl)pent-1-en-3-one + O2 = 3-(methylsulfanyl)propanoate + CO + formate + 2 H(+). It functions in the pathway amino-acid biosynthesis; L-methionine biosynthesis via salvage pathway; L-methionine from S-methyl-5-thio-alpha-D-ribose 1-phosphate: step 5/6. Functionally, catalyzes 2 different reactions between oxygen and the acireductone 1,2-dihydroxy-3-keto-5-methylthiopentene (DHK-MTPene) depending upon the metal bound in the active site. Fe-containing acireductone dioxygenase (Fe-ARD) produces formate and 2-keto-4-methylthiobutyrate (KMTB), the alpha-ketoacid precursor of methionine in the methionine recycle pathway. Ni-containing acireductone dioxygenase (Ni-ARD) produces methylthiopropionate, carbon monoxide and formate, and does not lie on the methionine recycle pathway. This chain is Acireductone dioxygenase (adi1), found in Schizosaccharomyces pombe (strain 972 / ATCC 24843) (Fission yeast).